Here is a 1076-residue protein sequence, read N- to C-terminus: MQCLLREKPRSLALVNKDHALMFHSVPQNKNSLSVCVAEFTALSEKPLEGFRKISSHRIYGTLGLIELEGSNFLCVISGASEVARVRDKERVFRIMEVCFYSVNRSNWDHIRQENYSPDIPDGYDTDTQGYDSYKYAAEPFSSLRKLLTNGSFYFSLDFDITTRLQLRTSQTMTEPQYDSMHTQFMWNEFMLRQLIKFRSHLNGDEKSALDGCRFFTCAIRGFASTEQFKLGIQTIRLSLISRLSSLRAGTRFLSRGVDDDGNVANFVETETILDSSKYCVSYCQVRGSIPIFWEQEGVQMFGQKIDITRSLEATRAAFEKHFTSLIEEYGPVHIINLLGTGSGERSLSERLRQHIQLSPEKDLIHLTEFDYHSQIRSFEDANKIRPMIYSDAETFGFYFENNEGQSIVVQDGVFRTNCLDCLDRTNVIQNLVSRVFLEQVMIYTRQNAGYDFWQVHSTIWANNGDALARIYTGTGALKSSFTRKGKLSIAGALNDLSKSVGRMYINNFQDKGRQETIDLLLGRLIDQHPVILYDPIHEYVNHELRKRENEFSEHKNVKIFVASYNLNGCSATTKLENWLFPENTPLADIYVVGFQEIVQLTPQQVISADPAKRREWESCVKRLLNGKCTSGPGYVQLRSGQLVGTALMIFCKESCLPSIKNVEGTVKKTGLGGVSGNKGAVAIRFDYEDTGLCFITSHLAAGYTNYDERDHDYRTIASGLRFRRGRSIFNHDYVVWFGDFNYRISLTYEEVVPCIAQGKLSYLFEYDQLNKQMLTGKVFPFFSELPITFPPTYKFDIGTDIYDTSDKHRVPAWTDRILYRGELVPHSYQSVPLYYSDHRPIYATYEANIVKVDREKKKILFEELYNQRKQEVRDASQTSYTLIDIAGSVAGKPNLIPHLPANGVDKIKQPSSERSKWWFDDGLPAKSIAAPPGPEYRLNPSRPINPFEPTAEPDWISNTKQSFDKKSSLIDSIPALSPAPSSLARSSVSSQRSSTSIIPIKPNKPTKPDHLVAPRVKPLLPPRSGSSSSGVPAPNLTPVNVPPTPPPRKSSASQRSGDLLASSPEESSISWKPLV.

The SAC domain maps to 144–474; the sequence is LRKLLTNGSF…GDALARIYTG (331 aa). The tract at residues 534–880 is catalytic; it reads YDPIHEYVNH…QEVRDASQTS (347 aa). Disordered stretches follow at residues 930 to 958 and 977 to 1076; these read AAPPGPEYRLNPSRPINPFEPTAEPDWIS and LSPA…KPLV. Low complexity-rich tracts occupy residues 977–1004 and 1025–1040; these read LSPAPSSLARSSVSSQRSSTSIIPIKPN and SGSSSSGVPAPNLTPV. Residues 1065-1076 are compositionally biased toward polar residues; the sequence is PEESSISWKPLV.

It belongs to the synaptojanin family. This sequence in the central section; belongs to the inositol 1,4,5-trisphosphate 5-phosphatase family. Mg(2+) is required as a cofactor.

The protein localises to the cytoplasm. It carries out the reaction a 1,2-diacyl-sn-glycero-3-phospho-(1D-myo-inositol-4,5-bisphosphate) + H2O = a 1,2-diacyl-sn-glycero-3-phospho-(1D-myo-inositol 4-phosphate) + phosphate. Controls the cellular levels and subcellular distribution of phosphatidylinositol 3-phosphate and phosphatidylinositol 4,5-bisphosphate. Involved in distinct membrane trafficking and signal transduction pathways. Highly active against a range of soluble and lipid inositol phosphates. Active in dephosphorylating the 5-position of Ins(1,4,5)P3 and Ins(1,3,4,5)P4 and to a lesser extent Ins(1,4,5,6)P4. The enzyme is also active against PI(4,5)P2 presented in sonicated vesicles and Triton mixed micelles, and somewhat less active against PI(3,5)P2 in unilamellar vesicles. Activity against PI(3,5)P2 drops sharply when this substrate is presented in mixed micelles. Also hydrolyzes PIP3 to produce PI(3,4)P2. The sequence is that of Inositol-1,4,5-trisphosphate 5-phosphatase 1 (syj1) from Schizosaccharomyces pombe (strain 972 / ATCC 24843) (Fission yeast).